The following is a 217-amino-acid chain: tRNA (guanine-N(7)-)-methyltransferase (217 aa).

4 residues coordinate S-adenosyl-L-methionine: Glu-45, Glu-70, Asp-97, and Asp-119. The active site involves Asp-119. A substrate-binding site is contributed by Lys-123. The tract at residues 125 to 130 is interaction with RNA; sequence RHEKRR. Residues Asp-155 and 195-198 each bind substrate; that span reads TEYE.

Belongs to the class I-like SAM-binding methyltransferase superfamily. TrmB family.

The catalysed reaction is guanosine(46) in tRNA + S-adenosyl-L-methionine = N(7)-methylguanosine(46) in tRNA + S-adenosyl-L-homocysteine. It participates in tRNA modification; N(7)-methylguanine-tRNA biosynthesis. Catalyzes the formation of N(7)-methylguanine at position 46 (m7G46) in tRNA. The sequence is that of tRNA (guanine-N(7)-)-methyltransferase from Lactobacillus helveticus (strain DPC 4571).